The sequence spans 285 residues: RNA exonuclease 4 (285 aa).

Residues 1 to 14 are compositionally biased toward polar residues; the sequence is MAKLSQNWKKLSSK. The segment at 1 to 35 is disordered; it reads MAKLSQNWKKLSSKIQDKPKNGSVKKPTLKGKISK. An Exonuclease domain is found at 116-267; sequence YVAIDCEFVG…EDARATMLLF (152 aa).

It belongs to the REXO4 family.

It is found in the nucleus. Exoribonuclease involved in ribosome biosynthesis. Involved in the processing of ITS1, the internal transcribed spacer localized between the 18S and 5.8S rRNAs. The sequence is that of RNA exonuclease 4 (REX4) from Candida albicans (strain SC5314 / ATCC MYA-2876) (Yeast).